The primary structure comprises 454 residues: Inner membrane transport protein YajR (454 aa).

At 1 to 14 (MNDYKMTPGERRAT) the chain is on the periplasmic side. The chain crosses the membrane as a helical span at residues 15–35 (WGLGTVFSLRMLGMFMVLPVL). The Cytoplasmic portion of the chain corresponds to 36–47 (TTYGMALQGASE). A helical membrane pass occupies residues 48–68 (ALIGIAIGIYGLTQAVFQIPF). The Periplasmic portion of the chain corresponds to 69-84 (GLLSDRIGRKPLIVGG). A helical membrane pass occupies residues 85-105 (LAVFAAGSVIAALSDSIWGII). At 106 to 137 (LGRALQGSGAIAAAVMALLSDLTREQNRTKAM) the chain is on the cytoplasmic side. A helical transmembrane segment spans residues 138–158 (AFIGVSFGITFAIAMVLGPII). Over 159-165 (THKLGLH) the chain is Periplasmic. A helical transmembrane segment spans residues 166–186 (ALFWMIAILATTGIALTIWVV). Residues 187-216 (PNSSTHVLNRESGMVKGSFSKVLAEPRLLK) lie on the Cytoplasmic side of the membrane. Residues 217 to 237 (LNFGIMCLHILLMSTFVALPG) form a helical membrane-spanning segment. The Periplasmic segment spans residues 238–252 (QLADAGFPAAEHWKV). Residues 253–273 (YLATMLIAFGSVVPFIIYAEV) traverse the membrane as a helical segment. Residues 274–279 (KRKMKQ) lie on the Cytoplasmic side of the membrane. The chain crosses the membrane as a helical span at residues 280–300 (VFVFCVGLIVVAEIVLWNAQT). Topologically, residues 301–306 (QFWQLV) are periplasmic. A helical transmembrane segment spans residues 307–327 (VGVQLFFVAFNLMEALLPSLI). Residues 328–340 (SKESPAGYKGTAM) are Cytoplasmic-facing. A helical transmembrane segment spans residues 341–361 (GVYSTSQFLGVAIGGSLGGWI). Over 362-363 (NG) the chain is Periplasmic. The helical transmembrane segment at 364 to 384 (MFDGQGVFLAGAMLAAVWLTV) threads the bilayer. The Cytoplasmic portion of the chain corresponds to 385–454 (ASTMKEPPYV…FEIEQAIRQA (70 aa)).

The protein belongs to the major facilitator superfamily.

It is found in the cell inner membrane. The polypeptide is Inner membrane transport protein YajR (yajR) (Escherichia coli (strain K12)).